The sequence spans 112 residues: Putative pterin-4-alpha-carbinolamine dehydratase (112 aa).

The protein belongs to the pterin-4-alpha-carbinolamine dehydratase family.

It catalyses the reaction (4aS,6R)-4a-hydroxy-L-erythro-5,6,7,8-tetrahydrobiopterin = (6R)-L-erythro-6,7-dihydrobiopterin + H2O. In Shewanella halifaxensis (strain HAW-EB4), this protein is Putative pterin-4-alpha-carbinolamine dehydratase.